The primary structure comprises 298 residues: ATP phosphoribosyltransferase (298 aa).

This sequence belongs to the ATP phosphoribosyltransferase family.

It is found in the cytoplasm. The enzyme catalyses 1-(5-phospho-beta-D-ribosyl)-ATP + diphosphate = 5-phospho-alpha-D-ribose 1-diphosphate + ATP. Its pathway is amino-acid biosynthesis; L-histidine biosynthesis; L-histidine from 5-phospho-alpha-D-ribose 1-diphosphate: step 1/9. In terms of biological role, catalyzes the condensation of ATP and 5-phosphoribose 1-diphosphate to form N'-(5'-phosphoribosyl)-ATP (PR-ATP). Has a crucial role in the pathway because the rate of histidine biosynthesis seems to be controlled primarily by regulation of the enzymatic activity. In Candida albicans (strain SC5314 / ATCC MYA-2876) (Yeast), this protein is ATP phosphoribosyltransferase (HIS1).